A 192-amino-acid polypeptide reads, in one-letter code: Adenylate kinase (192 aa).

ATP is bound at residue 11–16 (GSGKGT). The tract at residues 31-60 (STGDIFRANVKGETPLGIEAKKYMDNGDFV) is NMP. AMP-binding positions include T32, R37, 58-60 (DFV), 86-89 (GYPR), and Q93. Positions 127–137 (GRAKETGRSDD) are LID. Position 128 (R128) interacts with ATP. AMP contacts are provided by R134 and R145. Position 173 (G173) interacts with ATP.

This sequence belongs to the adenylate kinase family. In terms of assembly, monomer.

It is found in the cytoplasm. The catalysed reaction is AMP + ATP = 2 ADP. Its pathway is purine metabolism; AMP biosynthesis via salvage pathway; AMP from ADP: step 1/1. Catalyzes the reversible transfer of the terminal phosphate group between ATP and AMP. Plays an important role in cellular energy homeostasis and in adenine nucleotide metabolism. The sequence is that of Adenylate kinase from Pseudarthrobacter chlorophenolicus (strain ATCC 700700 / DSM 12829 / CIP 107037 / JCM 12360 / KCTC 9906 / NCIMB 13794 / A6) (Arthrobacter chlorophenolicus).